Consider the following 20-residue polypeptide: Protein PR-L3 (20 aa).

It belongs to the BetVI family.

The polypeptide is Protein PR-L3 (Lupinus luteus (European yellow lupine)).